Here is a 140-residue protein sequence, read N- to C-terminus: Transmembrane protein 234 homolog (140 aa).

4 helical membrane-spanning segments follow: residues 14–34 (IYAVLSILLVAIMWGATNPFI), 64–84 (WQYLLPLVINQLGSIVYVLTL), 88–108 (ELSLTVPMANSLTFVFTAITA), and 116–136 (SGWKIYCGMTLVILGTVICGL).

Belongs to the TMEM234 family.

It is found in the membrane. The sequence is that of Transmembrane protein 234 homolog from Anopheles gambiae (African malaria mosquito).